A 153-amino-acid polypeptide reads, in one-letter code: Aspartate carbamoyltransferase regulatory chain (153 aa).

4 residues coordinate Zn(2+): Cys-109, Cys-114, Cys-138, and Cys-141.

This sequence belongs to the PyrI family. Contains catalytic and regulatory chains. Requires Zn(2+) as cofactor.

Its function is as follows. Involved in allosteric regulation of aspartate carbamoyltransferase. The polypeptide is Aspartate carbamoyltransferase regulatory chain (Shigella flexneri serotype 5b (strain 8401)).